A 156-amino-acid polypeptide reads, in one-letter code: Gene 55 protein (156 aa).

The tract at residues 132 to 156 (KRRWSGGNASSHEERMRGPFTEVAE) is disordered.

This chain is Gene 55 protein (55), found in Mycobacterium phage L5 (Mycobacteriophage L5).